The following is a 205-amino-acid chain: LexA repressor (205 aa).

Positions 28-48 (RAEIAASLGFRSPNAAEEHLK) form a DNA-binding region, H-T-H motif. Residues serine 122 and lysine 159 each act as for autocatalytic cleavage activity in the active site.

Belongs to the peptidase S24 family. In terms of assembly, homodimer.

It catalyses the reaction Hydrolysis of Ala-|-Gly bond in repressor LexA.. Its function is as follows. Represses a number of genes involved in the response to DNA damage (SOS response), including recA and lexA. Binds to the 16 bp palindromic sequence 5'-CTGTATATATATACAG-3'. In the presence of single-stranded DNA, RecA interacts with LexA causing an autocatalytic cleavage which disrupts the DNA-binding part of LexA, leading to derepression of the SOS regulon and eventually DNA repair. The protein is LexA repressor of Providencia rettgeri.